A 149-amino-acid chain; its full sequence is MARTLPIQKTTLLKKEEVKKDWYLINAEGQTLGRLATRIALVLMGKNKPNWTPHVDCGNFVVVINADKIKLTGKKWDQKIYYRHSGYPGGIKEFTARQLQQRNPEKLIQLAVKRMLPKTILGRKALKRLKIYAGSEHPHSAQKPIELNF.

This sequence belongs to the universal ribosomal protein uL13 family. In terms of assembly, part of the 50S ribosomal subunit.

In terms of biological role, this protein is one of the early assembly proteins of the 50S ribosomal subunit, although it is not seen to bind rRNA by itself. It is important during the early stages of 50S assembly. The polypeptide is Large ribosomal subunit protein uL13 (Thermosipho africanus (strain TCF52B)).